A 357-amino-acid chain; its full sequence is Pheromone receptor 1 (357 aa).

Helical transmembrane passes span 5–25 (ITPFFALVAFFLVLMPFAWHI), 32–52 (LIMLSIWLMLGNLDNFVNSMV), 67–90 (LSVRLRHLLFIAIPASNLAIARKL), 110–130 (VIIDLLICLGIPIIYTSLMIV), 145–165 (WPMMVFSWLWVLLVAAPVIVV), 206–226 (LLLLTAIDMLLFFPIYVGTIA), and 268–288 (LILARLVCPLSAYIFFAMFGL). A disordered region spans residues 338–357 (ANTSTKSEKSDIDMRGSEAA). Positions 343–357 (KSEKSDIDMRGSEAA) are enriched in basic and acidic residues.

Belongs to the G-protein coupled receptor 4 family.

The protein localises to the membrane. In terms of biological role, receptor for the A2 pheromone, a prenylated mating factor. This is Pheromone receptor 1 (PRA1) from Mycosarcoma maydis (Corn smut fungus).